Consider the following 141-residue polypeptide: HTH-type transcriptional repressor NsrR (141 aa).

In terms of domain architecture, HTH rrf2-type spans 2 to 129 (QLTNFTDYGL…DNYTLADLVE (128 aa)). The segment at residues 28-51 (ISEVTDVYGVSRNHMVKIINQLSR) is a DNA-binding region (H-T-H motif). [2Fe-2S] cluster-binding residues include Cys-91, Cys-96, and Cys-102.

The cofactor is [2Fe-2S] cluster.

In terms of biological role, nitric oxide-sensitive repressor of genes involved in protecting the cell against nitrosative stress. May require iron for activity. This chain is HTH-type transcriptional repressor NsrR, found in Shigella boydii serotype 18 (strain CDC 3083-94 / BS512).